Here is an 844-residue protein sequence, read N- to C-terminus: DNA mismatch repair protein MutS (844 aa).

An ATP-binding site is contributed by 602 to 609 (GPNMSGKS).

The protein belongs to the DNA mismatch repair MutS family.

Functionally, this protein is involved in the repair of mismatches in DNA. It is possible that it carries out the mismatch recognition step. This protein has a weak ATPase activity. The sequence is that of DNA mismatch repair protein MutS from Streptococcus pneumoniae serotype 19F (strain G54).